The following is a 142-amino-acid chain: RNA polymerase-binding transcription factor DksA (142 aa).

3 disordered regions span residues 1–20, 51–70, and 119–142; these read MQTA…EDEP, HLQK…SSET, and RPTA…HRDD. The dksA C4-type zinc finger occupies 104 to 128; that stretch reads CEETGEPIGLARLEARPTATMSVEA. Basic and acidic residues predominate over residues 128–142; that stretch reads AQERHERRERVHRDD.

This sequence belongs to the DksA family. Interacts directly with the RNA polymerase.

The protein localises to the cytoplasm. Transcription factor that acts by binding directly to the RNA polymerase (RNAP). Required for negative regulation of rRNA expression and positive regulation of several amino acid biosynthesis promoters. The protein is RNA polymerase-binding transcription factor DksA of Caulobacter vibrioides (strain ATCC 19089 / CIP 103742 / CB 15) (Caulobacter crescentus).